Consider the following 704-residue polypeptide: SH3KBP1-binding protein 1 (704 aa).

At alanine 2 the chain carries N-acetylalanine. The BTB domain maps to 19 to 88 (EVIHLNVGGK…LRTKELDPRG (70 aa)). The disordered stretch occupies residues 146-165 (VGPQQIGGRPAPVRRSNTMP). Threonine 163 carries the phosphothreonine modification. WD repeat units follow at residues 233–280 (RLDW…GGSE), 283–322 (VFHL…WQVQ), 324–359 (VQPI…LRMK), 428–466 (VHRS…GMIS), and 548–586 (LECE…DGLG). The interval 609–704 (PLTSSRASFP…PKNTLNETSF (96 aa)) is disordered. Positions 611–631 (TSSRASFPSPSPRTSLTSLHS) are enriched in low complexity. The PXXXPR signature appears at 618 to 623 (PSPSPR). 2 positions are modified to phosphoserine: serine 644 and serine 646. The short motif at 678 to 683 (PTPAPR) is the PXXXPR element.

Belongs to the KCTD3 family. As to quaternary structure, monomer. Interacts with CUL3; interaction is direct and forms a 5:5 heterodecamer. Interacts (via PXXXPR motifs) with SH3KBP1 (via SH3 domains). Directly interacts with cathepsin B/CTSB.

The protein resides in the lysosome. Its function is as follows. Inhibits CBL-SH3KBP1 complex mediated down-regulation of EGFR signaling by sequestration of SH3KBP1. Binds to SH3KBP1 and prevents its interaction with CBL and inhibits translocation of SH3KBP1 to EGFR containing vesicles upon EGF stimulation. The polypeptide is SH3KBP1-binding protein 1 (Shkbp1) (Rattus norvegicus (Rat)).